A 538-amino-acid chain; its full sequence is Chaperonin GroEL (538 aa).

Residues Thr-29–Pro-32, Asp-86–Thr-90, Gly-413, Asn-476–Ala-478, and Asp-492 each bind ATP.

The protein belongs to the chaperonin (HSP60) family. As to quaternary structure, forms a cylinder of 14 subunits composed of two heptameric rings stacked back-to-back. Interacts with the co-chaperonin GroES.

The protein localises to the cytoplasm. The enzyme catalyses ATP + H2O + a folded polypeptide = ADP + phosphate + an unfolded polypeptide.. Functionally, together with its co-chaperonin GroES, plays an essential role in assisting protein folding. The GroEL-GroES system forms a nano-cage that allows encapsulation of the non-native substrate proteins and provides a physical environment optimized to promote and accelerate protein folding. The sequence is that of Chaperonin GroEL from Staphylococcus aureus (strain MRSA252).